The primary structure comprises 426 residues: Glutamate/glutamine/aspartate/asparagine transport system permease protein BztB (426 aa).

The next 8 helical transmembrane spans lie at 25–45 (SITI…WLLN), 96–116 (LLVS…IGVL), 132–152 (VETF…TILA), 211–231 (LPVS…FWGW), 252–272 (WWPS…GLGF), 293–313 (SFTA…AEIV), 340–360 (SLVI…SQFL), and 396–416 (MLLM…LMNL). Positions 92–414 (LLNTLLVSVL…TISLTISSLM (323 aa)) constitute an ABC transmembrane type-1 domain.

The protein belongs to the binding-protein-dependent transport system permease family. HisMQ subfamily. BztB and BztC form a heterodimer which can form a membrane complex with a homodimer of BztD.

The protein localises to the cell inner membrane. Part of a binding-protein-dependent transport system for glutamate, glutamine, aspartate and asparagine. Probably responsible for the translocation of the substrate across the membrane. The sequence is that of Glutamate/glutamine/aspartate/asparagine transport system permease protein BztB (bztB) from Rhodobacter capsulatus (strain ATCC BAA-309 / NBRC 16581 / SB1003).